A 926-amino-acid polypeptide reads, in one-letter code: MGGSASSQLDEGKCAYIRGKTEASIKNFSPYYSRQYSVAFCNHVRSEVEQQRDLTSQFLKTKPPLEPGTVLYEAELSQFAEDIRKWKDRYIVIKNDFAVESYESKEAYQRGAVPKSRILPAGGKVLTSEEEYSLLSDKHFPDPTASSEKNSQPFVLLPKAFPVYLWQPYLRHGYFCFHEAAEQQKFSALLNDCIRHLNHDYMKQTTFEAQAFLEAVQFFRQEKGHYGSWEMTTGDEVQVLSKLVMEELLPTLQTDLLPKLKGKKNDRKRAWFGLLEEAYNLVQHQVSEGLNALKEECRALTKDLEGTIRSDMDQIVTSKNFLTGKIRAMVAQPAEQCCGESVQPFLASILEELMGPVSSGFSEVRALFEKEVDELSQSFHATQDSAQLKEGLQQLMKLPLDSVKMEPCYTKVTLLPERLLDLQSRFRFPHVDLVVQRTQNYMQELMENAVFTFEQLLSPYLQGEASRIPVAIEKVKLRVLKQYDYDSSTIRKKIFQEALIQITLPTVQKALASTCKPELQKYEQFIFADHTNMIHVENVYEEILYEILLDETLKVITEAAILKKHNLFEDNMALPSESVSSLTDLKTAMGSNQASPARRVSAILPGAPDNELPSNEVFQEPEEKKEQPGVPGSLAISASSCPSGGDGQVSVDHSAGGPLTVENTAGPLSSHLSEVEAGGTLKDEEPTCQSPEPSAVPGSLKELKKLLTVTVSVESAPVVENDIHNGTPVPQENIKEEESKIHPEASHPAAIQQDSCEEREVREKEAQPLEAEAPGVDLGILPEGRGSTSQSTSGGLTENTSCPGPIEEPFEAQEPAEKVLPAIVSTEDSPQAGGEAEHSVTVTPQEDATLSSNPICPMESNEVAQASGDQEVLGGEDSSALGMDTEQVNDTHEHACQWLVEDTLSTDILAVHDFDVSSPEQPSEEW.

The N-myristoyl glycine moiety is linked to residue glycine 2. Serine 578, serine 581, serine 595, serine 601, and serine 640 each carry phosphoserine. Disordered regions lie at residues 604-699 (LPGA…VPGS) and 719-889 (VEND…EQVN). Positions 661–672 (VENTAGPLSSHL) are enriched in polar residues. Serine 699 bears the Phosphoserine mark. The segment covering 733-745 (NIKEEESKIHPEA) has biased composition (basic and acidic residues). Serine 755 bears the Phosphoserine mark. The segment covering 756–767 (CEEREVREKEAQ) has biased composition (basic and acidic residues). The segment covering 784 to 797 (GRGSTSQSTSGGLT) has biased composition (low complexity). The span at 840–854 (VTVTPQEDATLSSNP) shows a compositional bias: polar residues. Serine 923 is modified (phosphoserine).

Belongs to the Niban family.

The protein resides in the cytoplasm. It localises to the membrane. Regulates phosphorylation of a number of proteins involved in translation regulation including EIF2A, EIF4EBP1 and RPS6KB1. May be involved in the endoplasmic reticulum stress response. The sequence is that of Protein Niban 1 from Mus musculus (Mouse).